Consider the following 551-residue polypeptide: HTH-type transcriptional regulator SgrR (551 aa).

An HTH marR-type domain is found at 1–116; sequence MPSARLQQQF…LVSHLGRSFR (116 aa). Residues 26 to 49 constitute a DNA-binding region (H-T-H motif); the sequence is LNELAALLSCSRRHMRTLLNTMQD. The segment at 163–492 is solute-binding; sequence ELEADIAHHW…IDWQADAARW (330 aa).

Activates the small RNA gene sgrS under glucose-phosphate stress conditions as well as yfdZ. Represses its own transcription under both stress and non-stress conditions. Might act as a sensor of the intracellular accumulation of phosphoglucose by binding these molecules in its C-terminal solute-binding domain. In Escherichia coli O1:K1 / APEC, this protein is HTH-type transcriptional regulator SgrR.